The following is a 37-amino-acid chain: Large ribosomal subunit protein bL36c (37 aa).

The protein belongs to the bacterial ribosomal protein bL36 family.

Its subcellular location is the plastid. The polypeptide is Large ribosomal subunit protein bL36c (rpl36) (Euglena longa (Euglenophycean alga)).